The sequence spans 194 residues: Cysteine and glycine-rich protein 3 (194 aa).

The interval Met1 to Gly5 is interaction with TCAP. The region spanning Cys10 to Cys61 is the LIM zinc-binding 1 domain. The Nuclear localization signal motif lies at Arg64–Lys69. The interval Gln94–Ser105 is interaction with CLF2. Residues Ser95, Ser111, and Ser153 each carry the phosphoserine modification. Positions Cys120–Cys171 constitute an LIM zinc-binding 2 domain.

In terms of assembly, self-associates. Oligomeric in the cytoplasm and monomeric in the nucleus. Homooligomers preferentially form along the actin cytoskeleton. Interacts with TCAP. Interacts with LDHD, MYOD1, MYOG, ACTN2, NRAP, MYF6. Interacts (via N-terminus)D with GLRX3 (via C-terminus) and PPP3CA; GLRX3 and calcineurin compete for interaction with CSRP3. Interacts with CFL2; the stoichiometry influences F-actin depolymerization and possibly two molecules of CFL2 can interact with one molecule of CSRP3 resulting in the highest functional impact; the interaction is stronger with phosphorylated CFL2. Phosphorylated by PKC/PRKCA.

It is found in the nucleus. Its subcellular location is the cytoplasm. It localises to the cytoskeleton. The protein resides in the myofibril. The protein localises to the sarcomere. It is found in the z line. In terms of biological role, positive regulator of myogenesis. Acts as a cofactor for myogenic bHLH transcription factors such as MYOD1, and probably MYOG and MYF6. Enhances the DNA-binding activity of the MYOD1:TCF3 isoform E47 complex and may promote formation of a functional MYOD1:TCF3 isoform E47:MEF2A complex involved in myogenesis. Plays a crucial and specific role in the organization of cytosolic structures in cardiomyocytes. Could play a role in mechanical stretch sensing. May be a scaffold protein that promotes the assembly of interacting proteins at Z-line structures. It is essential for calcineurin anchorage to the Z line. Required for stress-induced calcineurin-NFAT activation. The role in regulation of cytoskeleton dynamics by association with CFL2 is reported conflictingly. Proposed to contribute to the maintenance of muscle cell integrity through an actin-based mechanism. Can directly bind to actin filaments, cross-link actin filaments into bundles without polarity selectivity and protect them from dilution- and cofilin-mediated depolymerization; the function seems to involve its self-association. In vitro can inhibit PKC/PRKCA activity. Proposed to be involved in cardiac stress signaling by down-regulating excessive PKC/PRKCA signaling. This is Cysteine and glycine-rich protein 3 (Csrp3) from Mus musculus (Mouse).